Consider the following 277-residue polypeptide: Proteasome subunit beta type-7 (277 aa).

Residues 1 to 43 (MAAVSVYAPPVGGFSFDNCRRNAVLEADFAKRGYKLPKVRKTG) constitute a propeptide, removed in mature form. Thr-44 functions as the Nucleophile in the catalytic mechanism.

It belongs to the peptidase T1B family. As to quaternary structure, the 26S proteasome consists of a 20S proteasome core and two 19S regulatory subunits. The 20S proteasome core is a barrel-shaped complex made of 28 subunits that are arranged in four stacked rings. The two outer rings are each formed by seven alpha subunits, and the two inner rings are formed by seven beta subunits. The proteolytic activity is exerted by three beta-subunits PSMB5, PSMB6 and PSMB7. In terms of assembly, (Microbial infection) Interacts with HIV-1 Tat protein. Expressed at a low level in colonic mucosa. Up-regulated in colorectal cancer tissues.

The protein resides in the cytoplasm. Its subcellular location is the nucleus. It carries out the reaction Cleavage of peptide bonds with very broad specificity.. In terms of biological role, component of the 20S core proteasome complex involved in the proteolytic degradation of most intracellular proteins. This complex plays numerous essential roles within the cell by associating with different regulatory particles. Associated with two 19S regulatory particles, forms the 26S proteasome and thus participates in the ATP-dependent degradation of ubiquitinated proteins. The 26S proteasome plays a key role in the maintenance of protein homeostasis by removing misfolded or damaged proteins that could impair cellular functions, and by removing proteins whose functions are no longer required. Associated with the PA200 or PA28, the 20S proteasome mediates ubiquitin-independent protein degradation. This type of proteolysis is required in several pathways including spermatogenesis (20S-PA200 complex) or generation of a subset of MHC class I-presented antigenic peptides (20S-PA28 complex). Within the 20S core complex, PSMB7 displays a trypsin-like activity. In Homo sapiens (Human), this protein is Proteasome subunit beta type-7.